Reading from the N-terminus, the 638-residue chain is Carbon monoxide dehydrogenase (638 aa).

[4Fe-4S] cluster is bound by residues Cys46, Cys55, Cys58, Cys63, and Cys74. Residues His265, Cys299, Cys343, Cys452, Cys483, and Cys524 each contribute to the [Ni-4Fe-5S] cluster site.

This sequence belongs to the Ni-containing carbon monoxide dehydrogenase family. In terms of assembly, homodimer. Requires [4Fe-4S] cluster as cofactor. It depends on [Ni-4Fe-5S] cluster as a cofactor.

It catalyses the reaction CO + 2 oxidized [2Fe-2S]-[ferredoxin] + H2O = 2 reduced [2Fe-2S]-[ferredoxin] + CO2 + 2 H(+). In terms of biological role, CODH oxidizes carbon monoxide coupled, via CooF, to the reduction of a hydrogen cation by a hydrogenase (possibly CooH). This Methanopyrus kandleri (strain AV19 / DSM 6324 / JCM 9639 / NBRC 100938) protein is Carbon monoxide dehydrogenase (cooS).